Here is a 132-residue protein sequence, read N- to C-terminus: Large ribosomal subunit protein bL21 (132 aa).

The disordered stretch occupies residues 112–132 (AEKPARKPRAKKTNEVTTDGA).

The protein belongs to the bacterial ribosomal protein bL21 family. As to quaternary structure, part of the 50S ribosomal subunit. Contacts protein L20.

This protein binds to 23S rRNA in the presence of protein L20. The protein is Large ribosomal subunit protein bL21 of Dehalococcoides mccartyi (strain ATCC BAA-2266 / KCTC 15142 / 195) (Dehalococcoides ethenogenes (strain 195)).